The primary structure comprises 313 residues: Methionyl-tRNA formyltransferase (313 aa).

The segment at 32–51 (QPDRRKGRGKELQPPPAKRK) is disordered. 109 to 112 (SLLP) serves as a coordination point for (6S)-5,6,7,8-tetrahydrofolate.

The protein belongs to the Fmt family.

It catalyses the reaction L-methionyl-tRNA(fMet) + (6R)-10-formyltetrahydrofolate = N-formyl-L-methionyl-tRNA(fMet) + (6S)-5,6,7,8-tetrahydrofolate + H(+). Functionally, attaches a formyl group to the free amino group of methionyl-tRNA(fMet). The formyl group appears to play a dual role in the initiator identity of N-formylmethionyl-tRNA by promoting its recognition by IF2 and preventing the misappropriation of this tRNA by the elongation apparatus. This is Methionyl-tRNA formyltransferase from Natranaerobius thermophilus (strain ATCC BAA-1301 / DSM 18059 / JW/NM-WN-LF).